Reading from the N-terminus, the 384-residue chain is Anhydro-N-acetylmuramic acid kinase (384 aa).

9 to 16 serves as a coordination point for ATP; sequence GTSVDGID.

This sequence belongs to the anhydro-N-acetylmuramic acid kinase family.

The catalysed reaction is 1,6-anhydro-N-acetyl-beta-muramate + ATP + H2O = N-acetyl-D-muramate 6-phosphate + ADP + H(+). Its pathway is amino-sugar metabolism; 1,6-anhydro-N-acetylmuramate degradation. The protein operates within cell wall biogenesis; peptidoglycan recycling. Functionally, catalyzes the specific phosphorylation of 1,6-anhydro-N-acetylmuramic acid (anhMurNAc) with the simultaneous cleavage of the 1,6-anhydro ring, generating MurNAc-6-P. Is required for the utilization of anhMurNAc either imported from the medium or derived from its own cell wall murein, and thus plays a role in cell wall recycling. This is Anhydro-N-acetylmuramic acid kinase from Rippkaea orientalis (strain PCC 8801 / RF-1) (Cyanothece sp. (strain PCC 8801)).